A 131-amino-acid polypeptide reads, in one-letter code: Histone H2A.2 (131 aa).

Ser2 carries the post-translational modification N-acetylserine. N6-acetyllysine occurs at positions 5 and 8. An N5-methylglutamine modification is found at Gln106. The residue at position 128 (Ser128) is a Phosphoserine. The [ST]-Q motif motif lies at 128-129; it reads SQ.

The protein belongs to the histone H2A family. In terms of assembly, the nucleosome is a histone octamer containing two molecules each of H2A, H2B, H3 and H4 assembled in one H3-H4 heterotetramer and two H2A-H2B heterodimers. The octamer wraps approximately 147 bp of DNA. In terms of processing, phosphorylated to form H2AS128ph (gamma-H2A) in response to DNA double-strand breaks (DSBs) generated by exogenous genotoxic agents and by stalled replication forks. Phosphorylation is dependent on the DNA damage checkpoint kinases MEC1/ATR and TEL1/ATM, spreads on either side of a detected DSB site and may mark the surrounding chromatin for recruitment of proteins required for DNA damage signaling and repair. Gamma-H2A is removed from the DNA prior to the strand invasion-primer extension step of the repair process and subsequently dephosphorylated by PPH3, a component of the histone H2A phosphatase complex (HTP-C). Dephosphorylation is necessary for efficient recovery from the DNA damage checkpoint. Post-translationally, acetylated by ESA1 to form H2AK4ac and H2AK7ac.

Its subcellular location is the nucleus. The protein localises to the chromosome. In terms of biological role, core component of nucleosome which plays a central role in DNA double strand break (DSB) repair. Nucleosomes wrap and compact DNA into chromatin, limiting DNA accessibility to the cellular machineries which require DNA as a template. Histones thereby play a central role in transcription regulation, DNA repair, DNA replication and chromosomal stability. DNA accessibility is regulated via a complex set of post-translational modifications of histones, also called histone code, and nucleosome remodeling. The polypeptide is Histone H2A.2 (HTA2) (Candida glabrata (strain ATCC 2001 / BCRC 20586 / JCM 3761 / NBRC 0622 / NRRL Y-65 / CBS 138) (Yeast)).